A 143-amino-acid polypeptide reads, in one-letter code: AP-2 complex subunit sigma (143 aa).

Belongs to the adaptor complexes small subunit family. Adaptor protein complex 2 (AP-2) is a heterotetramer composed of two large adaptins (alpha-type subunit APL3 and beta-type subunit APL1), a medium chain (mu-type subunit APM4) and a small adaptin (sigma-type subunit APS2).

The protein resides in the cell membrane. Its subcellular location is the membrane. It localises to the coated pit. In terms of biological role, component of the adaptor complexes which link clathrin to receptors in coated vesicles. Clathrin-associated protein complexes are believed to interact with the cytoplasmic tails of membrane proteins, leading to their selection and concentration. The sequence is that of AP-2 complex subunit sigma (aps-2) from Neurospora crassa (strain ATCC 24698 / 74-OR23-1A / CBS 708.71 / DSM 1257 / FGSC 987).